Here is a 449-residue protein sequence, read N- to C-terminus: Allantoinase (449 aa).

Zn(2+) is bound by residues H61, H63, K148, H184, H240, and D313. An N6-carboxylysine modification is found at K148.

This sequence belongs to the metallo-dependent hydrolases superfamily. Allantoinase family. As to quaternary structure, homotetramer. The cofactor is Zn(2+). In terms of processing, carboxylation allows a single lysine to coordinate two zinc ions.

The catalysed reaction is (S)-allantoin + H2O = allantoate + H(+). It participates in nitrogen metabolism; (S)-allantoin degradation; allantoate from (S)-allantoin: step 1/1. In terms of biological role, catalyzes the conversion of allantoin (5-ureidohydantoin) to allantoic acid by hydrolytic cleavage of the five-member hydantoin ring. In Desulfitobacterium hafniense (strain DSM 10664 / DCB-2), this protein is Allantoinase.